A 451-amino-acid chain; its full sequence is tRNA-2-methylthio-N(6)-dimethylallyladenosine synthase (451 aa).

Residues 6 to 122 (RRYHIITFGC…LDQLLEQVWA (117 aa)) enclose the MTTase N-terminal domain. Residues C15, C51, C85, C157, C161, and C164 each coordinate [4Fe-4S] cluster. Residues 143–384 (RESTVSAWVN…STQAMERSQR (242 aa)) form the Radical SAM core domain. Residues 383-447 (QRYLGRVEEV…AFSLTGEALS (65 aa)) form the TRAM domain.

Belongs to the methylthiotransferase family. MiaB subfamily. Monomer. Requires [4Fe-4S] cluster as cofactor.

Its subcellular location is the cytoplasm. It catalyses the reaction N(6)-dimethylallyladenosine(37) in tRNA + (sulfur carrier)-SH + AH2 + 2 S-adenosyl-L-methionine = 2-methylsulfanyl-N(6)-dimethylallyladenosine(37) in tRNA + (sulfur carrier)-H + 5'-deoxyadenosine + L-methionine + A + S-adenosyl-L-homocysteine + 2 H(+). In terms of biological role, catalyzes the methylthiolation of N6-(dimethylallyl)adenosine (i(6)A), leading to the formation of 2-methylthio-N6-(dimethylallyl)adenosine (ms(2)i(6)A) at position 37 in tRNAs that read codons beginning with uridine. The chain is tRNA-2-methylthio-N(6)-dimethylallyladenosine synthase from Synechocystis sp. (strain ATCC 27184 / PCC 6803 / Kazusa).